We begin with the raw amino-acid sequence, 868 residues long: LPS-assembly protein LptD (868 aa).

The N-terminal stretch at 1 to 24 is a signal peptide; sequence MLKGIHKYLLMCFGTVLFTVQANA.

Belongs to the LptD family. Component of the lipopolysaccharide transport and assembly complex. Interacts with LptE and LptA.

Its subcellular location is the cell outer membrane. In terms of biological role, together with LptE, is involved in the assembly of lipopolysaccharide (LPS) at the surface of the outer membrane. This chain is LPS-assembly protein LptD, found in Francisella tularensis subsp. novicida (strain U112).